We begin with the raw amino-acid sequence, 374 residues long: Isopentenyl-diphosphate delta-isomerase (374 aa).

13 to 14 (RK) serves as a coordination point for substrate. FMN-binding positions include 71–73 (GMT), Ser-104, and Asn-132. Residue 104–106 (SQR) participates in substrate binding. Residue Gln-171 participates in substrate binding. Glu-172 is a Mg(2+) binding site. Residues Lys-203, Thr-233, 282–284 (GMR), and 303–304 (AL) each bind FMN.

The protein belongs to the IPP isomerase type 2 family. As to quaternary structure, homooctamer. Dimer of tetramers. FMN is required as a cofactor. It depends on NADPH as a cofactor. Mg(2+) serves as cofactor.

Its subcellular location is the cytoplasm. The catalysed reaction is isopentenyl diphosphate = dimethylallyl diphosphate. Involved in the biosynthesis of isoprenoids. Catalyzes the 1,3-allylic rearrangement of the homoallylic substrate isopentenyl (IPP) to its allylic isomer, dimethylallyl diphosphate (DMAPP). This chain is Isopentenyl-diphosphate delta-isomerase, found in Thermococcus onnurineus (strain NA1).